Reading from the N-terminus, the 321-residue chain is MNRPERLQPGVKLRDADKVARIPVKVVPSERETMLRKPDWLRVKLPSSNQRILEIKAALRKNGLHSVCEEASCPNLAECFNHGTATFMILGAICTRRCPFCDVAHGRPLKADADEPKKLAQTIKDMKLKYVVITSVDRDDLRDGGAQHFADCIREIRLLNPEIKIETLVPDFRGRIDAALDILATEPPDVFNHNLETAPAHYRKARPGANYQWSLDLLKRFKERHPTIPTKSGLMMGLGETNEEIAEVLRDLRAHNVEMLTLGQYLQPSKFHLPVERYVPPAEFDELKALADELGFTHAACGPLVRSSYHADLQAQGKEVK.

[4Fe-4S] cluster-binding residues include Cys68, Cys73, Cys79, Cys94, Cys98, Cys101, and Ser308. The Radical SAM core domain maps to 80–297 (FNHGTATFMI…KALADELGFT (218 aa)).

This sequence belongs to the radical SAM superfamily. Lipoyl synthase family. The cofactor is [4Fe-4S] cluster.

The protein localises to the cytoplasm. The catalysed reaction is [[Fe-S] cluster scaffold protein carrying a second [4Fe-4S](2+) cluster] + N(6)-octanoyl-L-lysyl-[protein] + 2 oxidized [2Fe-2S]-[ferredoxin] + 2 S-adenosyl-L-methionine + 4 H(+) = [[Fe-S] cluster scaffold protein] + N(6)-[(R)-dihydrolipoyl]-L-lysyl-[protein] + 4 Fe(3+) + 2 hydrogen sulfide + 2 5'-deoxyadenosine + 2 L-methionine + 2 reduced [2Fe-2S]-[ferredoxin]. The protein operates within protein modification; protein lipoylation via endogenous pathway; protein N(6)-(lipoyl)lysine from octanoyl-[acyl-carrier-protein]: step 2/2. Functionally, catalyzes the radical-mediated insertion of two sulfur atoms into the C-6 and C-8 positions of the octanoyl moiety bound to the lipoyl domains of lipoate-dependent enzymes, thereby converting the octanoylated domains into lipoylated derivatives. The polypeptide is Lipoyl synthase (Shewanella frigidimarina (strain NCIMB 400)).